A 203-amino-acid chain; its full sequence is ATP-dependent Clp protease proteolytic subunit (203 aa).

The Nucleophile role is filled by Ser98. His123 is an active-site residue.

The protein belongs to the peptidase S14 family. As to quaternary structure, fourteen ClpP subunits assemble into 2 heptameric rings which stack back to back to give a disk-like structure with a central cavity, resembling the structure of eukaryotic proteasomes.

The protein resides in the cytoplasm. It catalyses the reaction Hydrolysis of proteins to small peptides in the presence of ATP and magnesium. alpha-casein is the usual test substrate. In the absence of ATP, only oligopeptides shorter than five residues are hydrolyzed (such as succinyl-Leu-Tyr-|-NHMec, and Leu-Tyr-Leu-|-Tyr-Trp, in which cleavage of the -Tyr-|-Leu- and -Tyr-|-Trp bonds also occurs).. Cleaves peptides in various proteins in a process that requires ATP hydrolysis. Has a chymotrypsin-like activity. Plays a major role in the degradation of misfolded proteins. The chain is ATP-dependent Clp protease proteolytic subunit from Desulfotalea psychrophila (strain LSv54 / DSM 12343).